Consider the following 1381-residue polypeptide: Major capsid protein (1381 aa).

The protein belongs to the herpesviridae major capsid protein family. Homomultimer. Makes the hexons and eleven out of twelve pentons. Interacts with triplex proteins 1/TRX1 and 2/TRX2; adjacent capsomers are linked together in groups of three by triplexes, heterotrimeric complexes composed of one molecule of TRX1 and two molecules of TRX2. Interacts with scaffold protein; this interaction allows efficient MCP transport to the host nucleus. Interacts with capsid vertex component 2/CVC2. Interacts with the small capsomere-interacting protein/SCP.

It localises to the virion. The protein localises to the host nucleus. Functionally, self-assembles to form an icosahedral capsid with a T=16 symmetry, about 200 nm in diameter, and consisting of 150 hexons and 12 pentons (total of 162 capsomers). Hexons form the edges and faces of the capsid and are each composed of six MCP molecules. In contrast, one penton is found at each of the 12 vertices. Eleven of the pentons are MCP pentamers, while the last vertex is occupied by the portal complex. The capsid is surrounded by a layer of proteinaceous material designated the tegument which, in turn, is enclosed in an envelope of host cell-derived lipids containing virus-encoded glycoproteins. The chain is Major capsid protein from Epstein-Barr virus (strain AG876) (HHV-4).